A 302-amino-acid chain; its full sequence is Sulfate adenylyltransferase subunit 2 (302 aa).

Residues 279–302 (ERQGRAIDHDQSGSMELKKRQGYF) form a disordered region. The span at 280–302 (RQGRAIDHDQSGSMELKKRQGYF) shows a compositional bias: basic and acidic residues.

The protein belongs to the PAPS reductase family. CysD subfamily. As to quaternary structure, heterodimer composed of CysD, the smaller subunit, and CysN.

The catalysed reaction is sulfate + ATP + H(+) = adenosine 5'-phosphosulfate + diphosphate. It functions in the pathway sulfur metabolism; hydrogen sulfide biosynthesis; sulfite from sulfate: step 1/3. In terms of biological role, with CysN forms the ATP sulfurylase (ATPS) that catalyzes the adenylation of sulfate producing adenosine 5'-phosphosulfate (APS) and diphosphate, the first enzymatic step in sulfur assimilation pathway. APS synthesis involves the formation of a high-energy phosphoric-sulfuric acid anhydride bond driven by GTP hydrolysis by CysN coupled to ATP hydrolysis by CysD. The chain is Sulfate adenylyltransferase subunit 2 from Photobacterium profundum (strain SS9).